Consider the following 91-residue polypeptide: MPSTPEEKKKVLTRVRRIRGQIDALERSLEGDAECRAILQQIAAVRGAANGLMAEVLESHIRETFDRNDCYSREVSQSVDDTIELVRAYLK.

It belongs to the FrmR/RcnR family. Homotetramer.

It localises to the cytoplasm. Its function is as follows. Formaldehyde sensor. In the absence of formaldehyde, mediates repression of the frmRAB operon. Acts by binding directly to the frmRAB promoter region. In the presence of formaldehyde, it dissociates from the frmRAB promoter region and allows expression of the formaldehyde detoxification system encoded by frmA and frmB. This Escherichia coli (strain UTI89 / UPEC) protein is Transcriptional repressor FrmR.